The chain runs to 460 residues: Adenosylhomocysteinase (460 aa).

Substrate contacts are provided by Thr-83, Asp-158, and Glu-184. 185-187 (TTT) contributes to the NAD(+) binding site. Substrate contacts are provided by Lys-214 and Asp-218. Residues Asn-219, 248–253 (GYGDVG), Glu-271, 327–329 (IGH), and Asn-373 contribute to the NAD(+) site.

This sequence belongs to the adenosylhomocysteinase family. Requires NAD(+) as cofactor.

It is found in the cytoplasm. The enzyme catalyses S-adenosyl-L-homocysteine + H2O = L-homocysteine + adenosine. The protein operates within amino-acid biosynthesis; L-homocysteine biosynthesis; L-homocysteine from S-adenosyl-L-homocysteine: step 1/1. May play a key role in the regulation of the intracellular concentration of adenosylhomocysteine. The polypeptide is Adenosylhomocysteinase (Bdellovibrio bacteriovorus (strain ATCC 15356 / DSM 50701 / NCIMB 9529 / HD100)).